The primary structure comprises 584 residues: MTKEVCSNIGLWLLLTLLIGNYVVNLEASHHVYKRLTQSTNTKSPSVNQPYRTGFHFQPPKNWMNDPNGPMIYKGIYHLFYQWNPKGAVWGNIVWAHSTSTDLINWDPHPPAIFPSAPFDINGCWSGSATILPNGKPVILYTGIDPKNQQVQNIAEPKNLSDPYLREWKKSPLNPLMAPDAVNGINASSFRDPTTAWLGQDKKWRVIIGSKIHRRGLAITYTSKDFLKWEKSPEPLHYDDGSGMWECPDFFPVTRFGSNGVETSSFGEPNEILKHVLKISLDDTKHDYYTIGTYDRVKDKFVPDNGFKMDGTAPRYDYGKYYASKTFFDSAKNRRILWGWTNESSSVEDDVEKGWSGIQTIPRKIWLDRSGKQLIQWPVREVERLRTKQVKNLRNKVLKSGSRLEVYGVTAAQADVEVLFKVRDLEKADVIEPSWTDPQLICSKMNVSVKSGLGPFGLMVLASKNLEEYTSVYFRIFKARQNSNKYVVLMCSDQSRSSLKEDNDKTTYGAFVDINPHQPLSLRALIDHSVVESFGGKGRACITSRVYPKLAIGKSSHLFAFNYGYQSVDVLNLNAWSMNSAQIS.

The signal sequence occupies residues 1 to 28 (MTKEVCSNIGLWLLLTLLIGNYVVNLEA). Substrate is bound by residues 63–66 (WMND), Q82, W90, and 125–126 (WS). The active site involves D66. N-linked (GlcNAc...) asparagine glycosylation is found at N159 and N186. Residues 191-192 (RD), E246, and D282 contribute to the substrate site. Residues N342 and N446 are each glycosylated (N-linked (GlcNAc...) asparagine). A disulfide bridge links C442 with C491.

It belongs to the glycosyl hydrolase 32 family. As to expression, expressed in seedlings, leaves, flowers, and seeds.

It is found in the secreted. Its subcellular location is the extracellular space. It localises to the apoplast. The protein localises to the cell wall. It catalyses the reaction Hydrolysis of terminal non-reducing beta-D-fructofuranoside residues in beta-D-fructofuranosides.. In terms of biological role, beta-fructofuranosidase that can use sucrose and 1-kestose, and, to a lower extent, neokestose and levan, as substrates, but not inuline. The sequence is that of Beta-fructofuranosidase, insoluble isoenzyme CWINV1 (CWINV1) from Arabidopsis thaliana (Mouse-ear cress).